The chain runs to 551 residues: BAG family molecular chaperone regulator 8, chloroplastic (551 aa).

Residues 1-19 show a composition bias toward basic residues; the sequence is MASHHHHNHNHVCSRHQNH. The interval 1–46 is disordered; the sequence is MASHHHHNHNHVCSRHQNHHNNTPQFATSPNCCNKSNHPSPPPAED. Residues 1–52 constitute a chloroplast transit peptide; sequence MASHHHHNHNHVCSRHQNHHNNTPQFATSPNCCNKSNHPSPPPAEDNLLHLV. Positions 20–38 are enriched in polar residues; that stretch reads HNNTPQFATSPNCCNKSNH. The region spanning 131–160 is the IQ domain; the sequence is RDSAARVIQTHFRSYLVHRSISFRQLKELA. The region spanning 147-228 is the BAG domain; sequence VHRSISFRQL…RFVQYVDDCV (82 aa). The disordered stretch occupies residues 246–281; the sequence is GKKPQGFGTSSEDEDNNADMSDDSEEVPVSSIDKRK. Acidic residues predominate over residues 256–271; sequence SEDEDNNADMSDDSEE. Serine 332 bears the Phosphoserine mark. Disordered regions lie at residues 414 to 433 and 450 to 551; these read DEGK…KGSG and NVYK…KMEP. Residues 479–499 show a composition bias toward basic and acidic residues; it reads GEEKGNVNEVEEIKYVPKENE. The segment covering 500 to 513 has biased composition (acidic residues); it reads SFEEEEEKETDSEN. Over residues 522–534 the composition is skewed to basic and acidic residues; the sequence is EGDKRVTKKEVQH.

Binds to the ATPase domain of HSP70/HSC70 chaperones.

Its subcellular location is the plastid. It is found in the chloroplast. Functionally, co-chaperone that regulates diverse cellular pathways, such as programmed cell death and stress responses. The sequence is that of BAG family molecular chaperone regulator 8, chloroplastic (BAG1) from Arabidopsis thaliana (Mouse-ear cress).